The sequence spans 265 residues: Putative cysteine-rich receptor-like protein kinase At4g11521 (265 aa).

A signal peptide spans 1 to 23 (MMLNTLFLPIFLFFLITFDYVST). 2 consecutive Gnk2-homologous domains span residues 24 to 122 (QTCF…NISF) and 128 to 241 (MEPS…LYPF). N-linked (GlcNAc...) asparagine glycosylation is found at asparagine 34, asparagine 102, and asparagine 119. Asparagine 247 carries N-linked (GlcNAc...) asparagine glycosylation.

It belongs to the protein kinase superfamily. Ser/Thr protein kinase family. CRK subfamily.

It is found in the secreted. This chain is Putative cysteine-rich receptor-like protein kinase At4g11521, found in Arabidopsis thaliana (Mouse-ear cress).